Consider the following 144-residue polypeptide: Large ribosomal subunit protein uL11 (144 aa).

The protein belongs to the universal ribosomal protein uL11 family. Part of the ribosomal stalk of the 50S ribosomal subunit. Interacts with L10 and the large rRNA to form the base of the stalk. L10 forms an elongated spine to which L12 dimers bind in a sequential fashion forming a multimeric L10(L12)X complex. Post-translationally, one or more lysine residues are methylated.

Its function is as follows. Forms part of the ribosomal stalk which helps the ribosome interact with GTP-bound translation factors. The sequence is that of Large ribosomal subunit protein uL11 from Francisella tularensis subsp. mediasiatica (strain FSC147).